An 812-amino-acid chain; its full sequence is Phospholipase D alpha 1 (812 aa).

In terms of domain architecture, C2 spans 1-130 (MAQILLHGTL…LGGEEIDKWL (130 aa)). Asp-190 is a Ca(2+) binding site. One can recognise a PLD phosphodiesterase 1 domain in the interval 330–368 (TMFTHHQKIVVVDHEMPNQGSQQRRIVSFIGGIDLCDGR). Residues His-335, Lys-337, and Asp-342 contribute to the active site. His-335 serves as a coordination point for a 1,2-diacyl-sn-glycero-3-phosphate. His-374 and His-408 together coordinate Ca(2+). 2 residues coordinate a 1,2-diacyl-sn-glycero-3-phosphate: Gln-524 and His-663. One can recognise a PLD phosphodiesterase 2 domain in the interval 658–685 (FMIYVHTKMMIVDDEYIIIGSANINQRS). Active-site residues include His-663, Lys-665, and Asp-670. Position 724 (Glu-724) interacts with Ca(2+).

Belongs to the phospholipase D family. C2-PLD subfamily. In terms of assembly, monomer. Ca(2+) is required as a cofactor.

It catalyses the reaction a 1,2-diacyl-sn-glycero-3-phosphocholine + H2O = a 1,2-diacyl-sn-glycero-3-phosphate + choline + H(+). Hydrolyzes glycerol-phospholipids at the terminal phosphodiesteric bond. Plays an important role in various cellular processes. The protein is Phospholipase D alpha 1 (PLD1) of Zea mays (Maize).